The sequence spans 381 residues: Creatine kinase B-type (381 aa).

The residue at position 4 (Ser-4) is a Phosphoserine. The 88-residue stretch at 11–98 folds into the Phosphagen kinase N-terminal domain; that stretch reads KLRFPAEDEF…FDPIIEDRHG (88 aa). Phosphothreonine is present on Thr-35. Residue Lys-45 forms a Glycyl lysine isopeptide (Lys-Gly) (interchain with G-Cter in ubiquitin) linkage. Val-72 is a creatine binding site. Residues 96-110 are compositionally biased toward basic and acidic residues; the sequence is RHGGYKPSDEHKTDL. The interval 96 to 122 is disordered; that stretch reads RHGGYKPSDEHKTDLNPDNLQGGDDLD. Residues Lys-101 and Lys-107 each participate in a glycyl lysine isopeptide (Lys-Gly) (interchain with G-Cter in ubiquitin) cross-link. Tyr-125 carries the post-translational modification Phosphotyrosine. The Phosphagen kinase C-terminal domain maps to 125–367; that stretch reads YVLSSRVRTG…KLLIEMEQRL (243 aa). ATP is bound by residues 128-132, Arg-130, Arg-132, and His-191; that span reads SSRVR. Residues 130–138 form an internal MTS-like signal region; it reads RVRTGRSIR. Ser-199 carries the phosphoserine modification. Glu-232 lines the creatine pocket. Arg-236 contacts ATP. A 3'-nitrotyrosine modification is found at Tyr-269. Ser-285 is a creatine binding site. An ATP-binding site is contributed by Arg-292. At Ser-309 the chain carries Phosphoserine. ATP is bound by residues Arg-320, 320-325, and Asp-335; that span reads RGTGGV. Thr-322 carries the phosphothreonine modification. Lys-381 participates in a covalent cross-link: Glycyl lysine isopeptide (Lys-Gly) (interchain with G-Cter in ubiquitin).

The protein belongs to the ATP:guanido phosphotransferase family. As to quaternary structure, dimer of identical or non-identical chains, which can be either B (brain type) or M (muscle type). With MM being the major form in skeletal muscle and myocardium, MB existing in myocardium, and BB existing in many tissues, especially brain. Interacts with SLC12A6 (via C-terminus); the interaction may be required for SLC12A6 potassium-chloride cotransport activity. Post-translationally, ubiquitinated by the ECS(ASB9) complex, leading to its degradation by the proteasome.

The protein resides in the cytoplasm. It is found in the cytosol. Its subcellular location is the mitochondrion. The protein localises to the cell membrane. It catalyses the reaction creatine + ATP = N-phosphocreatine + ADP + H(+). Functionally, reversibly catalyzes the transfer of phosphate between ATP and various phosphogens (e.g. creatine phosphate). Creatine kinase isoenzymes play a central role in energy transduction in tissues with large, fluctuating energy demands, such as skeletal muscle, heart, brain and spermatozoa. Acts as a key regulator of adaptive thermogenesis as part of the futile creatine cycle: localizes to the mitochondria of thermogenic fat cells and acts by mediating phosphorylation of creatine to initiate a futile cycle of creatine phosphorylation and dephosphorylation. During the futile creatine cycle, creatine and N-phosphocreatine are in a futile cycle, which dissipates the high energy charge of N-phosphocreatine as heat without performing any mechanical or chemical work. This Homo sapiens (Human) protein is Creatine kinase B-type.